The primary structure comprises 170 residues: MQKTIRIIGIDPGLRRTGWGVIDTLGNSLRFVASGTVTSDGDMDLASRLCQLHDGLAEIVHSHQPDEAAVEQTFVNKDAVATLKLGQARGIAMLVPARAGLPVFEYAPNAVKKAVIGVGHGEKQQIHMMLKILMPKAEFKGNDAADALAIAICHAHNRGGDRMRRLLAAG.

Catalysis depends on residues D11, E71, and D143. Mg(2+) is bound by residues D11, E71, and D143.

The protein belongs to the RuvC family. As to quaternary structure, homodimer which binds Holliday junction (HJ) DNA. The HJ becomes 2-fold symmetrical on binding to RuvC with unstacked arms; it has a different conformation from HJ DNA in complex with RuvA. In the full resolvosome a probable DNA-RuvA(4)-RuvB(12)-RuvC(2) complex forms which resolves the HJ. Mg(2+) serves as cofactor.

It is found in the cytoplasm. It catalyses the reaction Endonucleolytic cleavage at a junction such as a reciprocal single-stranded crossover between two homologous DNA duplexes (Holliday junction).. Functionally, the RuvA-RuvB-RuvC complex processes Holliday junction (HJ) DNA during genetic recombination and DNA repair. Endonuclease that resolves HJ intermediates. Cleaves cruciform DNA by making single-stranded nicks across the HJ at symmetrical positions within the homologous arms, yielding a 5'-phosphate and a 3'-hydroxyl group; requires a central core of homology in the junction. The consensus cleavage sequence is 5'-(A/T)TT(C/G)-3'. Cleavage occurs on the 3'-side of the TT dinucleotide at the point of strand exchange. HJ branch migration catalyzed by RuvA-RuvB allows RuvC to scan DNA until it finds its consensus sequence, where it cleaves and resolves the cruciform DNA. In Agrobacterium fabrum (strain C58 / ATCC 33970) (Agrobacterium tumefaciens (strain C58)), this protein is Crossover junction endodeoxyribonuclease RuvC.